The sequence spans 352 residues: Protein Wnt-3a (352 aa).

An N-terminal signal peptide occupies residues 1–18 (MGCFGYLLLIIGLHQVLA). 9 disulfide bridges follow: cysteine 77–cysteine 88, cysteine 128–cysteine 136, cysteine 138–cysteine 155, cysteine 203–cysteine 217, cysteine 205–cysteine 212, cysteine 297–cysteine 312, cysteine 327–cysteine 342, cysteine 329–cysteine 339, and cysteine 334–cysteine 335. N-linked (GlcNAc...) asparagine glycosylation occurs at asparagine 87. Serine 209 carries the O-palmitoleoyl serine lipid modification. Asparagine 298 is a glycosylation site (N-linked (GlcNAc...) asparagine).

The protein belongs to the Wnt family. Post-translationally, disulfide bonds have critical and distinct roles in secretion and activity. Loss of each conserved cysteine results in high molecular weight oxidized Wnt oligomers, which are formed through inter-Wnt disulfide bonding. In terms of processing, palmitoleoylation is required for efficient binding to frizzled receptors. Depalmitoleoylation leads to Wnt signaling pathway inhibition. As to expression, at neurula in anterior neural fold; at tailbud in dorsal midline of midbrain.

The protein resides in the secreted. It localises to the extracellular space. It is found in the extracellular matrix. In terms of biological role, ligand for members of the frizzled family of seven transmembrane receptors. Functions in the canonical Wnt signaling pathway that results in activation of transcription factors of the TCF/LEF family. Required for normal embryonic mesoderm development and formation of caudal somites. Required for normal morphogenesis of the developing neural tube. The chain is Protein Wnt-3a (wnt3a) from Xenopus laevis (African clawed frog).